We begin with the raw amino-acid sequence, 407 residues long: Lysosomal phospholipase A and acyltransferase (407 aa).

A signal peptide spans 1–29 (MGCLCLYRSTLLTGGLLFLLMLADPAFPA). Asp-41 contributes to the substrate binding site. Cys-60 and Cys-84 are oxidised to a cystine. N-linked (GlcNAc...) asparagine glycosylation occurs at Asn-94. Catalysis depends on Ser-193, which acts as the Acyl-ester intermediate. Ser-193 lines the Zn(2+) pocket. Position 194 (Met-194) interacts with substrate. Asn-284 is a glycosylation site (N-linked (GlcNAc...) asparagine). Catalysis depends on charge relay system residues Asp-355 and His-387. A Zn(2+)-binding site is contributed by His-387. Asn-393 carries N-linked (GlcNAc...) asparagine glycosylation.

This sequence belongs to the AB hydrolase superfamily. Lipase family. N-glycosylated. In terms of processing, N-glycosylated. N-glycosylation is important for maturation of the enzyme and normal subcellular location. As to expression, detected in brain (at protein level).

Its subcellular location is the lysosome. The protein localises to the secreted. It is found in the membrane. It catalyses the reaction a 1,2-diacyl-sn-glycero-3-phosphocholine + H2O = a 2-acyl-sn-glycero-3-phosphocholine + a fatty acid + H(+). The enzyme catalyses 1-hexadecanoyl-2-(9Z-octadecenoyl)-sn-glycero-3-phosphocholine + H2O = 2-(9Z-octadecenoyl)-sn-glycero-3-phosphocholine + hexadecanoate + H(+). It carries out the reaction 1,2-di-(9Z-octadecenoyl)-sn-glycero-3-phosphocholine + H2O = 2-(9Z-octadecenoyl)-sn-glycero-3-phosphocholine + (9Z)-octadecenoate + H(+). The catalysed reaction is 1-hexadecanoyl-2-glutaroyl-sn-glycero-3-phosphocholine + H2O = 2-glutaroyl-sn-glycero-3-phosphocholine + hexadecanoate + H(+). It catalyses the reaction 1-hexadecanoyl-2-nonadioyl-sn-glycero-3-phosphocholine + H2O = 2-nonadioyl-sn-glycero-3-phosphocholine + hexadecanoate + H(+). The enzyme catalyses 1-hexadecanoyl-2-(5-oxopentanoyl)-sn-glycero-3-phosphocholine + H2O = 2-(5-oxopentanoyl)-sn-glycero-3-phosphocholine + hexadecanoate + H(+). It carries out the reaction 1-hexadecanoyl-2-(9-oxononanoyl)-sn-glycero-3-phosphocholine + H2O = 2-(9-oxononanoyl)-sn-glycero-3-phosphocholine + hexadecanoate + H(+). The catalysed reaction is 1,2-dihexadecanoyl-sn-glycero-3-phosphocholine + H2O = 2-hexadecanoyl-sn-glycero-3-phosphocholine + hexadecanoate + H(+). It catalyses the reaction a 1,2-diacyl-sn-glycero-3-phosphocholine + H2O = a 1-acyl-sn-glycero-3-phosphocholine + a fatty acid + H(+). The enzyme catalyses 1-hexadecanoyl-2-(9Z-octadecenoyl)-sn-glycero-3-phosphocholine + H2O = 1-hexadecanoyl-sn-glycero-3-phosphocholine + (9Z)-octadecenoate + H(+). It carries out the reaction 1,2-di-(9Z-octadecenoyl)-sn-glycero-3-phosphocholine + H2O = 1-(9Z-octadecenoyl)-sn-glycero-3-phosphocholine + (9Z)-octadecenoate + H(+). The catalysed reaction is 1,2-dihexadecanoyl-sn-glycero-3-phosphocholine + H2O = 1-hexadecanoyl-sn-glycero-3-phosphocholine + hexadecanoate + H(+). It catalyses the reaction a 1-acyl-sn-glycero-3-phosphocholine + H2O = sn-glycerol 3-phosphocholine + a fatty acid + H(+). The enzyme catalyses 1-hexadecanoyl-sn-glycero-3-phosphocholine + H2O = sn-glycerol 3-phosphocholine + hexadecanoate + H(+). It carries out the reaction N-(acetyl)-sphing-4-enine + a 1,2-diacyl-sn-glycero-3-phosphoethanolamine = 1-O-acyl-N-(acetyl)-sphing-4-enine + a 2-acyl-sn-glycero-3-phosphoethanolamine. The catalysed reaction is 1-hexadecanoyl-2-(9Z-octadecenoyl)-sn-glycero-3-phosphoethanolamine + N-(acetyl)-sphing-4-enine = 2-(9Z-octadecenoyl)-sn-glycero-3-phosphoethanolamine + 1-hexadecanoyl-N-(acetyl)-sphing-4-enine. It catalyses the reaction 1-hexadecanoyl-2-(9Z,12Z-octadecadienoyl)-sn-glycero-3-phosphoethanolamine + N-(acetyl)-sphing-4-enine = 2-(9Z,12Z)-octadecadienoyl-sn-glycero-3-phosphoethanolamine + 1-hexadecanoyl-N-(acetyl)-sphing-4-enine. The enzyme catalyses 1-hexadecanoyl-2-(5Z,8Z,11Z,14Z-eicosatetraenoyl)-sn-glycero-3-phosphoethanolamine + N-(acetyl)-sphing-4-enine = 2-(5Z,8Z,11Z,14Z)-eicosatetraenoyl-sn-glycero-3-phosphoethanolamine + 1-hexadecanoyl-N-(acetyl)-sphing-4-enine. It carries out the reaction N-(acetyl)-sphing-4-enine + a 1,2-diacyl-sn-glycero-3-phosphoethanolamine = 1-O-acyl-N-(acetyl)-sphing-4-enine + a 1-acyl-sn-glycero-3-phosphoethanolamine. The catalysed reaction is 1-hexadecanoyl-2-(9Z-octadecenoyl)-sn-glycero-3-phosphoethanolamine + N-(acetyl)-sphing-4-enine = 1-(9Z-octadecenoyl)-N-(acetyl)-sphing-4-enine + 1-hexadecanoyl-sn-glycero-3-phosphoethanolamine. It catalyses the reaction 1-hexadecanoyl-2-(9Z,12Z-octadecadienoyl)-sn-glycero-3-phosphoethanolamine + N-(acetyl)-sphing-4-enine = 1-(9Z,12Z-octadecadienoyl)-N-acetylsphing-4-enine + 1-hexadecanoyl-sn-glycero-3-phosphoethanolamine. The enzyme catalyses 1-hexadecanoyl-2-(5Z,8Z,11Z,14Z-eicosatetraenoyl)-sn-glycero-3-phosphoethanolamine + N-(acetyl)-sphing-4-enine = 1-(5Z,8Z,11Z,14Z)-eicosatetraenoyl-N-(acetyl)-sphing-4-enine + 1-hexadecanoyl-sn-glycero-3-phosphoethanolamine. It carries out the reaction N-(acetyl)-sphing-4-enine + a 1,2-diacyl-sn-glycero-3-phosphocholine = 1-O-acyl-N-(acetyl)-sphing-4-enine + a 2-acyl-sn-glycero-3-phosphocholine. The catalysed reaction is 1-hexadecanoyl-2-(9Z-octadecenoyl)-sn-glycero-3-phosphocholine + N-(acetyl)-sphing-4-enine = 1-hexadecanoyl-N-(acetyl)-sphing-4-enine + 2-(9Z-octadecenoyl)-sn-glycero-3-phosphocholine. It catalyses the reaction 1-hexadecanoyl-2-(9Z,12Z-octadecadienoyl)-sn-glycero-3-phosphocholine + N-(acetyl)-sphing-4-enine = 2-(9Z,12Z-octadecadienoyl)-sn-glycero-3-phosphocholine + 1-hexadecanoyl-N-(acetyl)-sphing-4-enine. The enzyme catalyses 1-hexadecanoyl-2-(5Z,8Z,11Z,14Z-eicosatetraenoyl)-sn-glycero-3-phosphocholine + N-(acetyl)-sphing-4-enine = 1-hexadecanoyl-N-(acetyl)-sphing-4-enine + 2-(5Z,8Z,11Z,14Z)-eicosatetraenoyl-sn-glycero-3-phosphocholine. It carries out the reaction 1-hexadecanoyl-2-(4Z,7Z,10Z,13Z,16Z,19Z-docosahexaenoyl)-sn-glycero-3-phosphocholine + N-(acetyl)-sphing-4-enine = 2-(4Z,7Z,10Z,13Z,16Z,19Z-docosahexaenoyl)-sn-glycero-3-phosphocholine + 1-hexadecanoyl-N-(acetyl)-sphing-4-enine. The catalysed reaction is 1-hexadecanoyl-2-nonadioyl-sn-glycero-3-phosphocholine + N-(acetyl)-sphing-4-enine = 2-nonadioyl-sn-glycero-3-phosphocholine + 1-hexadecanoyl-N-(acetyl)-sphing-4-enine. It catalyses the reaction 1-octadecanoyl-2-(9Z-octadecenoyl)-sn-glycero-3-phosphocholine + N-(acetyl)-sphing-4-enine = 1-octadecanoyl-N-(acetyl)-sphing-4-enine + 2-(9Z-octadecenoyl)-sn-glycero-3-phosphocholine. The enzyme catalyses 1-(9Z)-octadecenoyl-2-octadecanoyl-sn-glycero-3-phosphocholine + N-(acetyl)-sphing-4-enine = 2-octadecanoyl-sn-glycero-3-phosphocholine + 1-(9Z-octadecenoyl)-N-(acetyl)-sphing-4-enine. It carries out the reaction 1-octadecanoyl-2-(5Z,8Z,11Z,14Z-eicosatetraenoyl)-sn-glycero-3-phosphocholine + N-(acetyl)-sphing-4-enine = 1-octadecanoyl-N-(acetyl)-sphing-4-enine + 2-(5Z,8Z,11Z,14Z)-eicosatetraenoyl-sn-glycero-3-phosphocholine. The catalysed reaction is 1-(9Z-octadecenoyl)-2-hexadecanoyl-sn-glycero-3-phosphocholine + N-(acetyl)-sphing-4-enine = 1-(9Z-octadecenoyl)-N-(acetyl)-sphing-4-enine + 2-hexadecanoyl-sn-glycero-3-phosphocholine. It catalyses the reaction N-(acetyl)-sphing-4-enine + a 1,2-diacyl-sn-glycero-3-phosphocholine = 1-O-acyl-N-(acetyl)-sphing-4-enine + a 1-acyl-sn-glycero-3-phosphocholine. The enzyme catalyses 1-hexadecanoyl-2-(9Z-octadecenoyl)-sn-glycero-3-phosphocholine + N-(acetyl)-sphing-4-enine = 1-(9Z-octadecenoyl)-N-(acetyl)-sphing-4-enine + 1-hexadecanoyl-sn-glycero-3-phosphocholine. It carries out the reaction 1-hexadecanoyl-2-(9Z,12Z-octadecadienoyl)-sn-glycero-3-phosphocholine + N-(acetyl)-sphing-4-enine = 1-(9Z,12Z-octadecadienoyl)-N-acetylsphing-4-enine + 1-hexadecanoyl-sn-glycero-3-phosphocholine. The catalysed reaction is 1-hexadecanoyl-2-(5Z,8Z,11Z,14Z-eicosatetraenoyl)-sn-glycero-3-phosphocholine + N-(acetyl)-sphing-4-enine = 1-(5Z,8Z,11Z,14Z)-eicosatetraenoyl-N-(acetyl)-sphing-4-enine + 1-hexadecanoyl-sn-glycero-3-phosphocholine. It catalyses the reaction 1-hexadecanoyl-2-(4Z,7Z,10Z,13Z,16Z,19Z-docosahexaenoyl)-sn-glycero-3-phosphocholine + N-(acetyl)-sphing-4-enine = 1-(4Z,7Z,10Z,13Z,16Z,19Z-docosahexaenoyl)-N-(acetyl)-sphing-4-enine + 1-hexadecanoyl-sn-glycero-3-phosphocholine. The enzyme catalyses 1-octadecanoyl-2-(9Z-octadecenoyl)-sn-glycero-3-phosphocholine + N-(acetyl)-sphing-4-enine = 1-(9Z-octadecenoyl)-N-(acetyl)-sphing-4-enine + 1-octadecanoyl-sn-glycero-3-phosphocholine. It carries out the reaction 1-octadecanoyl-2-(9Z,12Z)-octadecadienoyl-sn-glycero-3-phosphocholine + N-(acetyl)-sphing-4-enine = 1-(9Z,12Z-octadecadienoyl)-N-acetylsphing-4-enine + 1-octadecanoyl-sn-glycero-3-phosphocholine. The catalysed reaction is 1-(9Z-octadecenoyl)-2-hexadecanoyl-sn-glycero-3-phosphocholine + N-(acetyl)-sphing-4-enine = 1-hexadecanoyl-N-(acetyl)-sphing-4-enine + 1-(9Z-octadecenoyl)-sn-glycero-3-phosphocholine. It catalyses the reaction 1-(9Z)-octadecenoyl-2-octadecanoyl-sn-glycero-3-phosphocholine + N-(acetyl)-sphing-4-enine = 1-octadecanoyl-N-(acetyl)-sphing-4-enine + 1-(9Z-octadecenoyl)-sn-glycero-3-phosphocholine. The enzyme catalyses 1,2-di-(9Z-octadecenoyl)-sn-glycero-3-phosphocholine + N-(acetyl)-sphing-4-enine = 1-(9Z-octadecenoyl)-N-(acetyl)-sphing-4-enine + 1-(9Z-octadecenoyl)-sn-glycero-3-phosphocholine. It carries out the reaction 1-octadecanoyl-2-(5Z,8Z,11Z,14Z-eicosatetraenoyl)-sn-glycero-3-phosphocholine + N-(acetyl)-sphing-4-enine = 1-(5Z,8Z,11Z,14Z)-eicosatetraenoyl-N-(acetyl)-sphing-4-enine + 1-octadecanoyl-sn-glycero-3-phosphocholine. The catalysed reaction is a 1,2-diacyl-sn-glycero-3-phospho-L-serine + N-(acetyl)-sphing-4-enine = a 2-acyl-sn-glycero-3-phospho-L-serine + 1-O-acyl-N-(acetyl)-sphing-4-enine. It catalyses the reaction 1-octadecanoyl-2-(9Z-octadecenoyl)-sn-glycero-3-phospho-L-serine + N-(acetyl)-sphing-4-enine = 2-(9Z-octadecenoyl)-sn-glycero-3-phospho-L-serine + 1-octadecanoyl-N-(acetyl)-sphing-4-enine. The enzyme catalyses a 1,2-diacyl-sn-glycero-3-phospho-L-serine + N-(acetyl)-sphing-4-enine = 1-O-acyl-N-(acetyl)-sphing-4-enine + a 1-acyl-sn-glycero-3-phospho-L-serine. It carries out the reaction 1-octadecanoyl-2-(9Z-octadecenoyl)-sn-glycero-3-phospho-L-serine + N-(acetyl)-sphing-4-enine = 1-octadecanoyl-sn-glycero-3-phosphoserine + 1-(9Z-octadecenoyl)-N-(acetyl)-sphing-4-enine. The catalysed reaction is a 1,2-diacyl-sn-glycero-3-phospho-(1'-sn-glycerol) + N-(acetyl)-sphing-4-enine = 2-acyl-sn-glycero-3-phospho-(1'-sn-glycerol) + 1-O-acyl-N-(acetyl)-sphing-4-enine. It catalyses the reaction 1-octadecanoyl-2-(9Z-octadecenoyl)-sn-glycero-3-phospho-(1'-sn-glycerol) + N-(acetyl)-sphing-4-enine = 2-(9Z-octadecenoyl)-sn-glycero-3-phospho-(1'-sn-glycerol) + 1-octadecanoyl-N-(acetyl)-sphing-4-enine. The enzyme catalyses a 1,2-diacyl-sn-glycero-3-phospho-(1'-sn-glycerol) + N-(acetyl)-sphing-4-enine = 1-O-acyl-N-(acetyl)-sphing-4-enine + 1-acyl-sn-glycero-3-phospho-(1'-sn-glycerol). It carries out the reaction 1-octadecanoyl-2-(9Z-octadecenoyl)-sn-glycero-3-phospho-(1'-sn-glycerol) + N-(acetyl)-sphing-4-enine = 1-octadecanoyl-sn-glycero-3-phospho-(1'-sn-glycerol) + 1-(9Z-octadecenoyl)-N-(acetyl)-sphing-4-enine. The catalysed reaction is an N-acylethanolamine + a 1,2-diacyl-sn-glycero-3-phosphocholine = 2-(acylamino)ethyl fatty acid + a 2-acyl-sn-glycero-3-phosphocholine. It catalyses the reaction an N-acylethanolamine + a 1,2-diacyl-sn-glycero-3-phosphocholine = 2-(acylamino)ethyl fatty acid + a 1-acyl-sn-glycero-3-phosphocholine. The enzyme catalyses N-(5Z,8Z,11Z,14Z-eicosatetraenoyl)-ethanolamine + 1,2-di-(9Z-octadecenoyl)-sn-glycero-3-phosphocholine = 2-[(5Z,8Z,11Z,14Z)-eicosatetraenoylamino]ethyl (9Z)-octadecenoate + (9Z-octadecenoyl)-sn-glycero-3-phosphocholine. It carries out the reaction N-(9Z-octadecenoyl) ethanolamine + 1,2-di-(9Z-octadecenoyl)-sn-glycero-3-phosphocholine = 2-[(9Z)-octadecenoylamino]ethyl (9Z)-octadecenoate + (9Z-octadecenoyl)-sn-glycero-3-phosphocholine. The catalysed reaction is a 3-acyl-sn-glycerol + a 1,2-diacyl-sn-glycero-3-phosphocholine = a 1,3-diacylglycerol + a 1-acyl-sn-glycero-3-phosphocholine. It catalyses the reaction a 3-acyl-sn-glycerol + a 1,2-diacyl-sn-glycero-3-phosphocholine = a 1,3-diacylglycerol + a 2-acyl-sn-glycero-3-phosphocholine. The enzyme catalyses 3-(9Z-octadecenoyl)-sn-glycerol + 1,2-di-(9Z-octadecenoyl)-sn-glycero-3-phosphocholine = 1,3-di-(9Z-octadecenoyl)-glycerol + (9Z-octadecenoyl)-sn-glycero-3-phosphocholine. It carries out the reaction 3-hexadecanoyl-sn-glycerol + 1,2-di-(9Z-octadecenoyl)-sn-glycero-3-phosphocholine = 1-(9Z)-octadecenoyl-3-hexadecanoyl-sn-glycerol + (9Z-octadecenoyl)-sn-glycero-3-phosphocholine. The catalysed reaction is a 1-acyl-sn-glycerol + a 1,2-diacyl-sn-glycero-3-phosphocholine = a 1,3-diacylglycerol + a 2-acyl-sn-glycero-3-phosphocholine. It catalyses the reaction a 1-acyl-sn-glycerol + a 1,2-diacyl-sn-glycero-3-phosphocholine = a 1,3-diacylglycerol + a 1-acyl-sn-glycero-3-phosphocholine. The enzyme catalyses 1-(9Z-octadecenoyl)-sn-glycerol + 1,2-di-(9Z-octadecenoyl)-sn-glycero-3-phosphocholine = 1,3-di-(9Z-octadecenoyl)-glycerol + (9Z-octadecenoyl)-sn-glycero-3-phosphocholine. It carries out the reaction 1-hexadecanoyl-sn-glycerol + 1,2-di-(9Z-octadecenoyl)-sn-glycero-3-phosphocholine = 1-hexadecanoyl-3-(9Z)-octadecenoyl-sn-glycerol + (9Z-octadecenoyl)-sn-glycero-3-phosphocholine. The catalysed reaction is a 2-acylglycerol + a 1,2-diacyl-sn-glycero-3-phosphocholine = a 1,2-diacylglycerol + a 2-acyl-sn-glycero-3-phosphocholine. It catalyses the reaction a 2-acylglycerol + a 1,2-diacyl-sn-glycero-3-phosphocholine = a 1,2-diacylglycerol + a 1-acyl-sn-glycero-3-phosphocholine. The enzyme catalyses 2-hexadecanoylglycerol + 1,2-di-(9Z-octadecenoyl)-sn-glycero-3-phosphocholine = 1-(9Z)-octadecenoyl-2-hexadecanoylglycerol + (9Z-octadecenoyl)-sn-glycero-3-phosphocholine. It carries out the reaction 1-O-alkylglycerol + a 1,2-diacyl-sn-glycero-3-phosphocholine = 1-O-alkyl-3-acylglycerol + a 1-acyl-sn-glycero-3-phosphocholine. The catalysed reaction is 1-O-alkylglycerol + a 1,2-diacyl-sn-glycero-3-phosphocholine = 1-O-alkyl-3-acylglycerol + a 2-acyl-sn-glycero-3-phosphocholine. It catalyses the reaction 1-O-hexadecylglycerol + 1,2-di-(9Z-octadecenoyl)-sn-glycero-3-phosphocholine = 1-O-hexadecyl-3-(9Z)-octadecenoylglycerol + (9Z-octadecenoyl)-sn-glycero-3-phosphocholine. The enzyme catalyses 1-O-alkyl-2-acyl-sn-glycerol + a 1,2-diacyl-sn-glycero-3-phosphocholine = 1-O-alkyl-2,3-diacyl-sn-glycerol + a 2-acyl-sn-glycero-3-phosphocholine. It carries out the reaction 1-O-alkyl-2-acyl-sn-glycerol + a 1,2-diacyl-sn-glycero-3-phosphocholine = 1-O-alkyl-2,3-diacyl-sn-glycerol + a 1-acyl-sn-glycero-3-phosphocholine. The catalysed reaction is 1-O-hexadecyl-2-acetyl-sn-glycerol + 1,2-di-(9Z-octadecenoyl)-sn-glycero-3-phosphocholine = 1-O-hexadecyl-2-acetyl-3-(9Z)-octadecenoyl-sn-glycerol + (9Z-octadecenoyl)-sn-glycero-3-phosphocholine. It catalyses the reaction 1-O-hexadecyl-2-O-methyl-sn-glycerol + 1,2-di-(9Z-octadecenoyl)-sn-glycero-3-phosphocholine = 1-O-hexadecyl-2-O-methyl-3-(9Z)-octadecenoyl-sn-glycerol + (9Z-octadecenoyl)-sn-glycero-3-phosphocholine. The enzyme catalyses a 1,2-diacyl-sn-glycero-3-phosphoethanolamine + H2O = a 1-acyl-sn-glycero-3-phosphoethanolamine + a fatty acid + H(+). It carries out the reaction 1-acyl-2-(5Z,8Z,11Z,14Z)-eicosatetraenoyl-sn-glycero-3-phosphoethanolamine + H2O = a 1-acyl-sn-glycero-3-phosphoethanolamine + (5Z,8Z,11Z,14Z)-eicosatetraenoate + H(+). The catalysed reaction is a 1,2-diacyl-sn-glycero-3-phospho-(1'-sn-glycerol) + H2O = 1-acyl-sn-glycero-3-phospho-(1'-sn-glycerol) + a fatty acid + H(+). It catalyses the reaction 1-hexadecanoyl-2-(9Z-octadecenoyl)-sn-glycero-3-phospho-(1'-sn-glycerol) + H2O = 1-hexadecanoyl-sn-glycero-3-phospho-(1'-sn-glycerol) + (9Z)-octadecenoate + H(+). The enzyme catalyses a 1,2-diacyl-sn-glycero-3-phospho-(1'-sn-glycerol) + H2O = 2-acyl-sn-glycero-3-phospho-(1'-sn-glycerol) + a fatty acid + H(+). It carries out the reaction 1-hexadecanoyl-2-(9Z-octadecenoyl)-sn-glycero-3-phospho-(1'-sn-glycerol) + H2O = 2-(9Z-octadecenoyl)-sn-glycero-3-phospho-(1'-sn-glycerol) + hexadecanoate + H(+). Transacylase activity is completely inhibited by Triton X-100 and partially inhibited by heparin. Moderately activated by Mg(2+) and Ca(2+). Functionally, has dual calcium-independent phospholipase and O-acyltransferase activities with a potential role in glycerophospholipid homeostasis and remodeling of acyl groups of lipophilic alcohols present in acidic cellular compartments. Catalyzes hydrolysis of the ester bond of the fatty acyl group attached at sn-1 or sn-2 position of phospholipids (phospholipase A1 or A2 activity) and transfer it to the hydroxyl group at the first carbon of lipophilic alcohols (O-acyltransferase activity). Among preferred fatty acyl donors are phosphatidylcholines, phosphatidylethanolamines, phosphatidylglycerols and phosphatidylserines. Favors sn-2 over sn-1 deacylation of unsaturated fatty acyl groups of phosphatidylcholines, phosphatidylethanolamines, and phosphatidylglycerols. Among preferred fatty acyl acceptors are natural lipophilic alcohols including short-chain ceramide N-acetyl-sphingosine (C2 ceramide), alkylacylglycerols, monoacylglycerols, and acylethanolamides such as anandamide and oleoylethanolamide. Selectively hydrolyzes the sn-1 fatty acyl group of truncated oxidized phospholipids and may play a role in detoxification of reactive oxidized phospholipids during oxidative stress. Required for normal phospholipid degradation in alveolar macrophages with potential implications in the clearance of pulmonary surfactant, which is mainly composed of dipalmitoylphosphatidylcholine (1,2-dihexadecanoyl-sn-glycero-3-phosphocholine). Involved in the first step of bis(monoacylglycero)phosphate (BMP) de novo synthesis from phosphatidylglycerol (1,2-diacyl-sn-glycero-3-phospho-(1'-sn-glycerol), PG). BMP is an important player in cargo sorting and degradation, regulation of cellular cholesterol levels and intercellular communication. At neutral pH, hydrolyzes the sn-1 fatty acyl group of the lysophosphatidylcholines. This Bos taurus (Bovine) protein is Lysosomal phospholipase A and acyltransferase (PLA2G15).